A 273-amino-acid chain; its full sequence is Nitrogenase iron protein 4 (273 aa).

An ATP-binding site is contributed by 8 to 15 (GKGGIGKS). Cys-94 provides a ligand contact to [4Fe-4S] cluster. Arg-97 is modified (ADP-ribosylarginine; by dinitrogenase reductase ADP-ribosyltransferase). Residue Cys-129 participates in [4Fe-4S] cluster binding.

Belongs to the NifH/BchL/ChlL family. Homodimer. It depends on [4Fe-4S] cluster as a cofactor. In terms of processing, the reversible ADP-ribosylation of Arg-97 inactivates the nitrogenase reductase and regulates nitrogenase activity.

It catalyses the reaction N2 + 8 reduced [2Fe-2S]-[ferredoxin] + 16 ATP + 16 H2O = H2 + 8 oxidized [2Fe-2S]-[ferredoxin] + 2 NH4(+) + 16 ADP + 16 phosphate + 6 H(+). Functionally, the key enzymatic reactions in nitrogen fixation are catalyzed by the nitrogenase complex, which has 2 components: the iron protein and the molybdenum-iron protein. This chain is Nitrogenase iron protein 4 (nifH4), found in Clostridium pasteurianum.